The chain runs to 207 residues: Uracil phosphoribosyltransferase (207 aa).

5-phospho-alpha-D-ribose 1-diphosphate contacts are provided by residues arginine 77, arginine 102, and 129–137; that span reads DPMLATGGS. Residues isoleucine 192 and 197–199 contribute to the uracil site; that span reads GDA. Aspartate 198 provides a ligand contact to 5-phospho-alpha-D-ribose 1-diphosphate.

Belongs to the UPRTase family. Mg(2+) serves as cofactor.

It catalyses the reaction UMP + diphosphate = 5-phospho-alpha-D-ribose 1-diphosphate + uracil. It functions in the pathway pyrimidine metabolism; UMP biosynthesis via salvage pathway; UMP from uracil: step 1/1. Allosterically activated by GTP. Functionally, catalyzes the conversion of uracil and 5-phospho-alpha-D-ribose 1-diphosphate (PRPP) to UMP and diphosphate. This is Uracil phosphoribosyltransferase from Dictyoglomus thermophilum (strain ATCC 35947 / DSM 3960 / H-6-12).